A 213-amino-acid polypeptide reads, in one-letter code: Phycocyanobilin lyase subunit beta (213 aa).

It belongs to the CpcE/RpcE/PecE family. CpcE and CpcF associate to form a lyase.

In terms of biological role, required for the chromophorylation of the CpcA gene product. This is Phycocyanobilin lyase subunit beta (cpcF) from Thermosynechococcus vestitus (strain NIES-2133 / IAM M-273 / BP-1).